Here is a 327-residue protein sequence, read N- to C-terminus: Delta(3,5)-Delta(2,4)-dienoyl-CoA isomerase, mitochondrial (327 aa).

The N-terminal 33 residues, 1 to 33 (MATAMTVSSKLRGLLMQQLRGTSQLYFNISLRS), are a transit peptide targeting the mitochondrion. 115–119 (SGIDL) contacts substrate. K147 carries the N6-acetyllysine modification. Residue G173 coordinates substrate. K230 is subject to N6-succinyllysine. S267 bears the Phosphoserine mark. K316 carries the N6-succinyllysine modification. The Microbody targeting signal signature appears at 325-327 (SKL). K326 carries the N6-acetyllysine modification.

It belongs to the enoyl-CoA hydratase/isomerase family. In terms of assembly, homohexamer.

It is found in the mitochondrion. Its subcellular location is the peroxisome. The enzyme catalyses (3E,5Z)-octadienoyl-CoA = (2E,4E)-octadienoyl-CoA. The catalysed reaction is (3E,5Z,8Z,11Z,14Z)-eicosapentaenoyl-CoA = (2E,4E,8Z,11Z,14Z)-eicosapentaenoyl-CoA. It participates in lipid metabolism; fatty acid beta-oxidation. Its function is as follows. Isomerization of 3-trans,5-cis-dienoyl-CoA to 2-trans,4-trans-dienoyl-CoA. The protein is Delta(3,5)-Delta(2,4)-dienoyl-CoA isomerase, mitochondrial of Mus musculus (Mouse).